The primary structure comprises 329 residues: ATP-dependent (S)-NAD(P)H-hydrate dehydratase (329 aa).

Residues 1 to 28 (MALGPGCRAVRGCRPVLKRAFSLHKAHS) constitute a mitochondrion transit peptide. One can recognise a YjeF C-terminal domain in the interval 35–326 (ILQLVRSVVP…AEVGPAFRRL (292 aa)). Lys49 is subject to N6-acetyllysine. The residue at position 67 (Tyr67) is a Phosphotyrosine. Residues Gly135 and 188-194 (NHVEFGR) contribute to the (6S)-NADPHX site. ATP is bound by residues 228 to 232 (KGEQD) and 247 to 256 (GSGRRCGGQG). (6S)-NADPHX is bound at residue Asp257.

This sequence belongs to the NnrD/CARKD family. The cofactor is Mg(2+).

It localises to the mitochondrion. It catalyses the reaction (6S)-NADHX + ATP = ADP + phosphate + NADH + H(+). It carries out the reaction (6S)-NADPHX + ATP = ADP + phosphate + NADPH + H(+). Its function is as follows. Catalyzes the dehydration of the S-form of NAD(P)HX at the expense of ATP, which is converted to ADP. Together with NAD(P)HX epimerase, which catalyzes the epimerization of the S- and R-forms, the enzyme allows the repair of both epimers of NAD(P)HX, a damaged form of NAD(P)H that is a result of enzymatic or heat-dependent hydration. The polypeptide is ATP-dependent (S)-NAD(P)H-hydrate dehydratase (Bos taurus (Bovine)).